The primary structure comprises 458 residues: Hyaluronidase conohyal-P1 (458 aa).

The first 18 residues, 1-18 (MRVVVVVTGLVVVVVATA), serve as a signal peptide directing secretion. The interval 24–47 (HDVKSASSPLSSSSVYQGSSGDDC) is disordered. Low complexity predominate over residues 28-43 (SASSPLSSSSVYQGSS). Residues Cys68 and Cys342 are joined by a disulfide bond. N-linked (GlcNAc...) asparagine glycosylation is found at Asn106 and Asn141. The active-site Proton donor is Glu151. N-linked (GlcNAc...) asparagine glycosylation is found at Asn261, Asn337, and Asn359. Residues 363-434 (VMADCSTTLC…VRPSRCHKQQ (72 aa)) form the EGF-like domain. 3 disulfide bridges follow: Cys367-Cys378, Cys372-Cys411, and Cys413-Cys422.

It belongs to the glycosyl hydrolase 56 family. As to expression, expressed by the venom duct.

It is found in the secreted. The catalysed reaction is Random hydrolysis of (1-&gt;4)-linkages between N-acetyl-beta-D-glucosamine and D-glucuronate residues in hyaluronate.. Its function is as follows. Hyaluronidase catalyzes the hydrolysis of hyaluronic acid (HA), an anionic, nonsulfated glycosaminoglycan distributed widely throughout connective, epithelial, and neural tissues. In venom, they are known to enhance diffusion of the venom by degrading the extracellular matrix. The polypeptide is Hyaluronidase conohyal-P1 (Conus purpurascens (Purple cone)).